A 330-amino-acid polypeptide reads, in one-letter code: Glycine betaine/proline betaine-binding periplasmic protein (330 aa).

The first 21 residues, 1–21, serve as a signal peptide directing secretion; sequence MRHSVLFATAFATLISTQTFA. Substrate-binding positions include Trp-86, His-90, and 161-163; that span reads WGC. Cys-157 and Cys-163 are joined by a disulfide.

The complex is composed of two ATP-binding proteins (ProV), two transmembrane proteins (ProW) and a solute-binding protein (ProX).

The protein localises to the periplasm. Its function is as follows. Part of the ProU ABC transporter complex involved in glycine betaine and proline betaine uptake. Binds glycine betaine and proline betaine with high affinity. The chain is Glycine betaine/proline betaine-binding periplasmic protein from Escherichia coli (strain K12).